The following is a 255-amino-acid chain: tRNA (adenine(58)-N(1))-methyltransferase TrmI (255 aa).

Residues 104 to 107 (SGGL), glutamate 125, histidine 130, glutamate 155, and aspartate 170 contribute to the S-adenosyl-L-methionine site.

This sequence belongs to the class I-like SAM-binding methyltransferase superfamily. TRM61 family. In terms of assembly, homotetramer composed of a dimer of dimers.

The enzyme catalyses adenosine(58) in tRNA + S-adenosyl-L-methionine = N(1)-methyladenosine(58) in tRNA + S-adenosyl-L-homocysteine + H(+). Functionally, catalyzes the S-adenosyl-L-methionine-dependent formation of N(1)-methyladenine at position 58 (m1A58) in tRNA. Is required for cell growth at extreme temperatures. This Thermus thermophilus (strain ATCC BAA-163 / DSM 7039 / HB27) protein is tRNA (adenine(58)-N(1))-methyltransferase TrmI (trmI).